Here is a 446-residue protein sequence, read N- to C-terminus: Coagulation factor VII (446 aa).

The signal sequence occupies residues 1 to 24 (MVPQTHGLLLLYFLLQLQGPLGAV). A propeptide spanning residues 25–41 (VFITQEEAHGVLHRQRR) is cleaved from the precursor. A Gla domain is found at 42-86 (ANSLLEELWSSSLERECNEERCSFEEAREIFKSPERTKQFWTIYS). 4-carboxyglutamate is present on residues Glu47, Glu48, Glu55, Glu57, Glu60, Glu61, Glu66, Glu67, Glu70, and Glu76. Cys58 and Cys63 are joined by a disulfide. Residues 87–123 (DGDQCASNPCQNGGTCQDHLKSYVCFCPLDFEGRNCE) enclose the EGF-like 1; calcium-binding domain. Intrachain disulfides connect Cys91-Cys102, Cys96-Cys111, Cys113-Cys122, Cys132-Cys143, Cys139-Cys153, Cys155-Cys168, Cys176-Cys303, Cys200-Cys205, Cys219-Cys235, and Cys351-Cys370. Ser93 is a glycosylation site (O-linked (Glc...) serine; alternate). Ser93 carries an O-linked (Xyl...) serine; alternate glycan. Residue Thr101 is glycosylated (O-linked (Fuc) threonine). A (3R)-3-hydroxyaspartate modification is found at Asp104. The EGF-like 2 domain occupies 128–169 (EQLICANENGDCDQYCRDHVGTKRTCSCHEDYVLQPDEVSCK). N-linked (GlcNAc...) asparagine glycosylation occurs at Asn186. Positions 194–433 (IVGGYVCPKG…YIDWLVKYMD (240 aa)) constitute a Peptidase S1 domain. The Charge relay system role is filled by His234. Asn244 carries N-linked (GlcNAc...) asparagine glycosylation. Asp283 functions as the Charge relay system in the catalytic mechanism. Asp379 is a binding site for substrate. The cysteines at positions 381 and 409 are disulfide-linked. The Charge relay system role is filled by Ser385.

The protein belongs to the peptidase S1 family. Heterodimer of a light chain and a heavy chain linked by a disulfide bond. The vitamin K-dependent, enzymatic carboxylation of some glutamate residues allows the modified protein to bind calcium. In terms of processing, the iron and 2-oxoglutarate dependent 3-hydroxylation of aspartate and asparagine is (R) stereospecific within EGF domains. Post-translationally, can be either O-glucosylated or O-xylosylated at Ser-93 by POGLUT1. Plasma.

The protein localises to the secreted. It catalyses the reaction Selective cleavage of Arg-|-Ile bond in factor X to form factor Xa.. Functionally, initiates the extrinsic pathway of blood coagulation. Serine protease that circulates in the blood in a zymogen form. Factor VII is converted to factor VIIa by factor Xa, factor XIIa, factor IXa, or thrombin by minor proteolysis. In the presence of tissue factor and calcium ions, factor VIIa then converts factor X to factor Xa by limited proteolysis. Factor VIIa also converts factor IX to factor IXa in the presence of tissue factor and calcium. The chain is Coagulation factor VII (F7) from Rattus norvegicus (Rat).